We begin with the raw amino-acid sequence, 173 residues long: Photosystem I assembly protein Ycf3 (173 aa).

3 TPR repeats span residues 35–68 (AFAYYRDGMSAQADGEYAEALENYQEALTLEEDP), 72–105 (SFILYNIALVHTSNGDHQTALDHYLQALDLNPKM), and 120–153 (GQRSEEAGNDDEAERHYDQAAEYWTQAIRLAPNN).

It belongs to the Ycf3 family.

It localises to the cellular thylakoid membrane. Essential for the assembly of the photosystem I (PSI) complex. May act as a chaperone-like factor to guide the assembly of the PSI subunits. The protein is Photosystem I assembly protein Ycf3 of Synechococcus elongatus (strain ATCC 33912 / PCC 7942 / FACHB-805) (Anacystis nidulans R2).